The primary structure comprises 466 residues: Aladin (466 aa).

5 WD repeats span residues 135–174 (WLNS…TTAT), 179–218 (PSQT…HLGR), 229–269 (PNNL…MQPL), 271–310 (RLGP…TTER), and 378–418 (LVGG…FDLQ).

The protein resides in the nucleus. It localises to the nuclear pore complex. The protein localises to the cytoplasm. It is found in the cytoskeleton. Its subcellular location is the spindle. Its function is as follows. Involved in mitotic spindle assembly. In Drosophila melanogaster (Fruit fly), this protein is Aladin.